Reading from the N-terminus, the 507-residue chain is ATP synthase subunit alpha, chloroplastic (507 aa).

Residue 170–177 (GDRQTGKT) coordinates ATP.

Belongs to the ATPase alpha/beta chains family. In terms of assembly, F-type ATPases have 2 components, CF(1) - the catalytic core - and CF(0) - the membrane proton channel. CF(1) has five subunits: alpha(3), beta(3), gamma(1), delta(1), epsilon(1). CF(0) has four main subunits: a, b, b' and c.

It is found in the plastid. The protein resides in the chloroplast thylakoid membrane. It catalyses the reaction ATP + H2O + 4 H(+)(in) = ADP + phosphate + 5 H(+)(out). Functionally, produces ATP from ADP in the presence of a proton gradient across the membrane. The alpha chain is a regulatory subunit. The chain is ATP synthase subunit alpha, chloroplastic from Atropa belladonna (Belladonna).